The sequence spans 185 residues: MGNSKLSKEEKDEIMKKTKYTSGDIEQLTKDFKVAAASDKKAGFSQEEFIKFFRIRFNEWDEASMVRMFKLFDSDGNGVIDVKEFITALYMMTRAPTTDKLGFLFDLFDSDKSGYLEAGEIEKLVNIVVVCSSAMGYTTSEAIDFVYSITSIKISREEFVKSASQSDKFVRMICFYDNPCKQLLY.

EF-hand domains follow at residues tryptophan 60–alanine 95 and proline 96–cysteine 131. Residues aspartate 73, aspartate 75, asparagine 77, glutamate 84, aspartate 109, aspartate 111, serine 113, tyrosine 115, and glutamate 120 each contribute to the Ca(2+) site.

The protein belongs to the recoverin family.

The polypeptide is Calcium-binding protein K-like (Dictyostelium discoideum (Social amoeba)).